Reading from the N-terminus, the 406-residue chain is Argininosuccinate synthase (406 aa).

Residues 13 to 21 and A40 contribute to the ATP site; that span reads AYSGGLDTS. L-citrulline contacts are provided by Y91 and S96. G121 is a binding site for ATP. L-aspartate contacts are provided by T123, N127, and D128. Residue N127 coordinates L-citrulline. L-citrulline contacts are provided by R131, S182, S191, E267, and Y279.

It belongs to the argininosuccinate synthase family. Type 1 subfamily. In terms of assembly, homotetramer.

The protein resides in the cytoplasm. The catalysed reaction is L-citrulline + L-aspartate + ATP = 2-(N(omega)-L-arginino)succinate + AMP + diphosphate + H(+). It functions in the pathway amino-acid biosynthesis; L-arginine biosynthesis; L-arginine from L-ornithine and carbamoyl phosphate: step 2/3. In Brucella suis biovar 1 (strain 1330), this protein is Argininosuccinate synthase.